We begin with the raw amino-acid sequence, 483 residues long: Pre-glycoprotein polyprotein GP complex (483 aa).

Residue Gly-2 is the site of N-myristoyl glycine; by host attachment. Residues 2-17 are Extracellular-facing; it reads GQFISFMQEIPIFLQE. The chain crosses the membrane as a helical span at residues 18–32; sequence ALNIALVAVSLICIV. A topological domain (cytoplasmic) is located at residue Lys-33. A helical membrane pass occupies residues 34–53; that stretch reads GLVNLYRCGLFQLMVFLVLA. Extracellular loops occupy residues 54 to 58 and 59 to 422; these read GRSCS and EETF…TLVD. Cys-57 contacts Zn(2+). N-linked (GlcNAc...) asparagine; by host glycosylation is found at Asn-83 and Asn-95. 6 cysteine pairs are disulfide-bonded: Cys-92–Cys-224, Cys-134–Cys-162, Cys-205–Cys-211, Cys-269–Cys-282, Cys-291–Cys-300, and Cys-354–Cys-375. Asn-164 and Asn-176 each carry an N-linked (GlcNAc...) asparagine; by host glycan. N-linked (GlcNAc...) asparagine; by host glycosylation is found at Asn-355, Asn-363, Asn-380, and Asn-385. Residues 423–443 traverse the membrane as a helical segment; the sequence is ICFWSTVFFTSTLFLHLIGFP. The Cytoplasmic segment spans residues 444 to 483; it reads THEHIRGEGCPLPHRLNSMGGCRCGKYLPLKKPTIWHRRH. Zn(2+)-binding residues include His-445, His-447, Cys-453, His-457, Cys-465, Cys-467, and His-483.

This sequence belongs to the arenaviridae GPC protein family. As to quaternary structure, homotetramer; disulfide-linked. Homotetramer. GP2 homotetramers bind through ionic interactions with GP1 homotetramers to form the GP complex together with the stable signal peptide. The GP-C polyprotein interacts with the host protease MBTPS1/SKI-1 resulting in the polyprotein processing. In terms of processing, specific enzymatic cleavages in vivo yield mature proteins. GP-C polyprotein is cleaved in the endoplasmic reticulum by the host protease MBTPS1. Only cleaved glycoprotein is incorporated into virions. Post-translationally, the SSP remains stably associated with the GP complex following cleavage by signal peptidase and plays crucial roles in the trafficking of GP through the secretory pathway. Myristoylation is necessary for GP2-mediated fusion activity.

It is found in the virion membrane. Its subcellular location is the host endoplasmic reticulum membrane. The protein resides in the host Golgi apparatus membrane. The protein localises to the host cell membrane. Functionally, class I viral fusion protein that directs fusion of viral and host endosomal membranes, leading to delivery of the nucleocapsid into the cytoplasm. Membrane fusion is mediated by irreversible conformational changes induced upon acidification in the endosome. Stable signal peptide (SSP): cleaved and functions as a signal peptide. In addition, it is also retained as the third component of the GP complex. The SSP is required for efficient glycoprotein expression, post-translational maturation cleavage of GP1 and GP2, glycoprotein transport to the cell surface plasma membrane, formation of infectious virus particles, and acid pH-dependent glycoprotein-mediated cell fusion. Its function is as follows. Interacts with the host receptor. The polypeptide is Pre-glycoprotein polyprotein GP complex (Tacaribe virus (strain V5) (TCRV)).